The primary structure comprises 188 residues: ATP synthase subunit b (188 aa).

The helical transmembrane segment at 19–39 (VYVLGATIVSFLVLFLFITYF) threads the bilayer.

It belongs to the ATPase B chain family. In terms of assembly, F-type ATPases have 2 components, F(1) - the catalytic core - and F(0) - the membrane proton channel. F(1) has five subunits: alpha(3), beta(3), gamma(1), delta(1), epsilon(1). F(0) has three main subunits: a(1), b(2) and c(10-14). The alpha and beta chains form an alternating ring which encloses part of the gamma chain. F(1) is attached to F(0) by a central stalk formed by the gamma and epsilon chains, while a peripheral stalk is formed by the delta and b chains.

The protein resides in the cell membrane. Its function is as follows. F(1)F(0) ATP synthase produces ATP from ADP in the presence of a proton or sodium gradient. F-type ATPases consist of two structural domains, F(1) containing the extramembraneous catalytic core and F(0) containing the membrane proton channel, linked together by a central stalk and a peripheral stalk. During catalysis, ATP synthesis in the catalytic domain of F(1) is coupled via a rotary mechanism of the central stalk subunits to proton translocation. Component of the F(0) channel, it forms part of the peripheral stalk, linking F(1) to F(0). The polypeptide is ATP synthase subunit b (Mesomycoplasma hyopneumoniae (strain 7448) (Mycoplasma hyopneumoniae)).